The primary structure comprises 387 residues: Acyl-[acyl-carrier-protein] 6-desaturase (387 aa).

A chloroplast-targeting transit peptide spans 1-29 (MALVFKSIGAHKTPPCTLNLASPALYHTR). 6 residues coordinate Fe cation: Glu131, Glu169, His172, Glu222, Glu255, and His258.

The protein belongs to the fatty acid desaturase type 2 family. Requires Fe(2+) as cofactor.

Its subcellular location is the plastid. It localises to the chloroplast. It carries out the reaction hexadecanoyl-[ACP] + 2 reduced [2Fe-2S]-[ferredoxin] + O2 + 2 H(+) = (6Z)-hexadecenoyl-[ACP] + 2 oxidized [2Fe-2S]-[ferredoxin] + 2 H2O. It participates in lipid metabolism; fatty acid metabolism. Inhibited by KCN or H(2)O(2). Its function is as follows. Delta(6) fatty acid desaturase introducing a cis double bond at carbon 6 of palmitoyl-[acyl-carrier protein](16:0-ACP), producing 16:1(6Z)-ACP. No activity with the coenzyme A ester of the fatty acid. The position of the double bond is determined by its distance from the carboxyl end of the fatty acid. Low activity with several saturated acyl-[acyl-carrier protein]s, including 14:0-ACP and 18:0-ACP. Requires reduced ferredoxin for detectable in vitro activity. This is Acyl-[acyl-carrier-protein] 6-desaturase from Thunbergia alata (Black-eyed Susan vine).